We begin with the raw amino-acid sequence, 211 residues long: Protein YCF54, chloroplastic (211 aa).

A chloroplast-targeting transit peptide spans 1–80 (MWSVTGALTV…GESTKYHFLV (80 aa)).

This sequence belongs to the ycf54 family. In terms of assembly, interacts with LFNR1 and CRD1/CHL27 in chloroplasts.

The protein localises to the plastid. It localises to the chloroplast. Involved in the biosynthesis of chlorophyll; acts probably as a scaffolding factor in the MgProto monomethylester (MgProtoME) cyclase complex to stabilize CRD1/CHL27, the catalytic subunit which catalyzes the formation of a fifth isocyclic ring to tetrapyrroles to form protochlorophyllide. In Arabidopsis thaliana (Mouse-ear cress), this protein is Protein YCF54, chloroplastic.